The following is a 304-amino-acid chain: MDLVNHLPDRLLFAVPKKGRLYEKCCSLLKGVDIQFRRSNRLDIAISTNLPIALIFLPAADIPIFVGEGNCDLGITGLDQIKEADMFNSVEDLLDLQFGSCKLQIQVPAEGEITKPEQLVGKKIVSSFTKLSVDYFKTLENVEDETKLSTSIRYVGGSVEASCALGVADAIVDLVESGETMKAAGLTAIETILQTSAHLISSKKPKFPELVERIHQRFEGLMAAQKYVLCNYNAPRSILSAVLQITPGRRSATISALEKKSDENEEWVAVSSMVEKKKISDIMDDLKKAGASDILVFDIGNCRV.

This sequence belongs to the ATP phosphoribosyltransferase family.

The protein localises to the cytoplasm. It catalyses the reaction 1-(5-phospho-beta-D-ribosyl)-ATP + diphosphate = 5-phospho-alpha-D-ribose 1-diphosphate + ATP. It functions in the pathway amino-acid biosynthesis; L-histidine biosynthesis; L-histidine from 5-phospho-alpha-D-ribose 1-diphosphate: step 1/9. Catalyzes the condensation of ATP and 5-phosphoribose 1-diphosphate to form N'-(5'-phosphoribosyl)-ATP (PR-ATP). Has a crucial role in the pathway because the rate of histidine biosynthesis seems to be controlled primarily by regulation of the enzymatic activity. This chain is ATP phosphoribosyltransferase (HIS1), found in Debaryomyces hansenii (strain ATCC 36239 / CBS 767 / BCRC 21394 / JCM 1990 / NBRC 0083 / IGC 2968) (Yeast).